The sequence spans 354 residues: Phosphoribosylformylglycinamidine cyclo-ligase (354 aa).

The protein belongs to the AIR synthase family.

The protein resides in the cytoplasm. It carries out the reaction 2-formamido-N(1)-(5-O-phospho-beta-D-ribosyl)acetamidine + ATP = 5-amino-1-(5-phospho-beta-D-ribosyl)imidazole + ADP + phosphate + H(+). Its pathway is purine metabolism; IMP biosynthesis via de novo pathway; 5-amino-1-(5-phospho-D-ribosyl)imidazole from N(2)-formyl-N(1)-(5-phospho-D-ribosyl)glycinamide: step 2/2. The sequence is that of Phosphoribosylformylglycinamidine cyclo-ligase from Synechococcus sp. (strain JA-2-3B'a(2-13)) (Cyanobacteria bacterium Yellowstone B-Prime).